We begin with the raw amino-acid sequence, 400 residues long: Large envelope protein (400 aa).

Disordered stretches follow at residues 1–50 and 84–116; these read MGGW…PHKD and ILTS…RDTH. A lipid anchor (N-myristoyl glycine; by host) is attached at G2. The segment at 2–119 is pre-S1; that stretch reads GGWSSKPRKG…PPLRDTHPQA (118 aa). The pre-S stretch occupies residues 2-174; sequence GGWSSKPRKG…LSTTGDPVPN (173 aa). Residues 2–181 are Virion surface; in external conformation-facing; the sequence is GGWSSKPRKG…VPNMENIASG (180 aa). Over 2-253 the chain is Intravirion; in internal conformation; that stretch reads GGWSSKPRKG…PGYRWMCLRR (252 aa). Residues 96 to 106 show a composition bias toward polar residues; sequence STNRQSGRQPT. The interval 120–174 is pre-S2; sequence VQWNSTTFHQTLQDPRVRALYLPAGGSSSGTVSPAQNTVSAISSILSTTGDPVPN. A helical membrane pass occupies residues 182 to 202; that stretch reads LLGPLLVLQAGFFSLTKILTI. The Intravirion; in external conformation segment spans residues 203–253; it reads PQSLDSWWTSLNFLGGTPVCLGQNSQSQISSHSPTCCPPICPGYRWMCLRR. A helical membrane pass occupies residues 254 to 274; sequence FIIFLCILLLCLIFLLVLLDY. Topologically, residues 275–348 are virion surface; that stretch reads QGMLPVCPLI…WASVRFSWLS (74 aa). N-linked (GlcNAc...) asparagine; by host glycosylation is present at N320. A helical transmembrane segment spans residues 349-369; the sequence is LLVPFVQWFVGLSPTVWLSVI. At 370–375 the chain is on the intravirion side; sequence WMMWFW. The helical transmembrane segment at 376–398 threads the bilayer; it reads GPSLYNILSPFMPLLPIFLCLWV. At 399–400 the chain is on the virion surface side; it reads YM.

This sequence belongs to the orthohepadnavirus major surface antigen family. In terms of assembly, li-HBsAg interacts with capsid protein and with HDV Large delta antigen. Isoform M associates with host chaperone CANX through its pre-S2 N glycan. This association may be essential for M proper secretion. Interacts (via its myristoylated pre-S1 region) with the host SLC10A1/NTCP; this interaction is essential for viral entry. Post-translationally, isoform M is N-terminally acetylated by host at a ratio of 90%, and N-glycosylated by host at the pre-S2 region. In terms of processing, myristoylated; this modification is essential for its interaction with the host protein SLC10A1/NTCP.

It is found in the virion membrane. Its function is as follows. The large envelope protein exists in two topological conformations, one which is termed 'external' or Le-HBsAg and the other 'internal' or Li-HBsAg. In its external conformation the protein attaches the virus to cell receptors and thereby initiating infection. This interaction determines the species specificity and liver tropism. This attachment induces virion internalization predominantly through caveolin-mediated endocytosis. The large envelope protein also assures fusion between virion membrane and endosomal membrane. In its internal conformation the protein plays a role in virion morphogenesis and mediates the contact with the nucleocapsid like a matrix protein. Functionally, the middle envelope protein plays an important role in the budding of the virion. It is involved in the induction of budding in a nucleocapsid independent way. In this process the majority of envelope proteins bud to form subviral lipoprotein particles of 22 nm of diameter that do not contain a nucleocapsid. The polypeptide is Large envelope protein (Homo sapiens (Human)).